A 933-amino-acid polypeptide reads, in one-letter code: Isoleucine--tRNA ligase (933 aa).

The 'HIGH' region signature appears at 57-67 (PYANGNIHVGH). Glutamate 554 serves as a coordination point for L-isoleucyl-5'-AMP. The 'KMSKS' region signature appears at 595–599 (KMSKS). Lysine 598 provides a ligand contact to ATP.

This sequence belongs to the class-I aminoacyl-tRNA synthetase family. IleS type 1 subfamily. Monomer.

It is found in the cytoplasm. It catalyses the reaction tRNA(Ile) + L-isoleucine + ATP = L-isoleucyl-tRNA(Ile) + AMP + diphosphate. Catalyzes the attachment of isoleucine to tRNA(Ile). As IleRS can inadvertently accommodate and process structurally similar amino acids such as valine, to avoid such errors it has two additional distinct tRNA(Ile)-dependent editing activities. One activity is designated as 'pretransfer' editing and involves the hydrolysis of activated Val-AMP. The other activity is designated 'posttransfer' editing and involves deacylation of mischarged Val-tRNA(Ile). The sequence is that of Isoleucine--tRNA ligase from Streptococcus pyogenes serotype M6 (strain ATCC BAA-946 / MGAS10394).